Here is a 237-residue protein sequence, read N- to C-terminus: 1-(5-phosphoribosyl)-5-[(5-phosphoribosylamino)methylideneamino] imidazole-4-carboxamide isomerase (237 aa).

Asp8 functions as the Proton acceptor in the catalytic mechanism. Asp129 acts as the Proton donor in catalysis.

The protein belongs to the HisA/HisF family.

It localises to the cytoplasm. The enzyme catalyses 1-(5-phospho-beta-D-ribosyl)-5-[(5-phospho-beta-D-ribosylamino)methylideneamino]imidazole-4-carboxamide = 5-[(5-phospho-1-deoxy-D-ribulos-1-ylimino)methylamino]-1-(5-phospho-beta-D-ribosyl)imidazole-4-carboxamide. Its pathway is amino-acid biosynthesis; L-histidine biosynthesis; L-histidine from 5-phospho-alpha-D-ribose 1-diphosphate: step 4/9. The sequence is that of 1-(5-phosphoribosyl)-5-[(5-phosphoribosylamino)methylideneamino] imidazole-4-carboxamide isomerase from Roseiflexus sp. (strain RS-1).